A 161-amino-acid chain; its full sequence is MGKQEKDLGTAWEYQGCLIPKDLYYDIENQVWVRVNEDGTVTLGLTDVGQTRAGRLLHIRVKPVGTKVKKGKPVATLESGKWAGPVPALVEGEIVEVNPKVVEDPNYINIDPYGDAWIVKIKPTSEETLKRDLSELAHGEKAHEEMKKHIDEWDIVCMRCV.

The 83-residue stretch at 40–122 (TVTLGLTDVG…YGDAWIVKIK (83 aa)) folds into the Lipoyl-binding domain. At Lys81 the chain carries N6-lipoyllysine.

This sequence belongs to the GcvH family. In terms of assembly, the glycine cleavage system is composed of four proteins: P, T, L and H. (R)-lipoate is required as a cofactor.

Functionally, the glycine cleavage system catalyzes the degradation of glycine. The H protein shuttles the methylamine group of glycine from the P protein to the T protein. This Aquifex aeolicus (strain VF5) protein is Glycine cleavage system H protein 3.